Here is a 618-residue protein sequence, read N- to C-terminus: Crinkler effector protein 16 (618 aa).

The first 19 residues, methionine 1–aspartate 19, serve as a signal peptide directing secretion. Positions phenylalanine 18–lysine 57 are LQLFLAK domain. A DWL domain region spans residues glutamine 58–isoleucine 139. The short motif at histidine 140–proline 146 is the HVLVXXP motif element. The N-linked (GlcNAc...) asparagine glycan is linked to asparagine 534.

Belongs to the Crinkler effector family.

The protein resides in the secreted. The protein localises to the host nucleus. In terms of biological role, secreted effector that elicits necrosis in host plants, a characteristic of plant innate immunity. The chain is Crinkler effector protein 16 from Phytophthora infestans (Potato late blight agent).